The following is a 205-amino-acid chain: Cytochrome c oxidase subunit 3 (205 aa).

5 helical membrane-spanning segments follow: residues 29–49 (TIVF…MYFV), 73–93 (LAIT…VFAA), 104–124 (WFLI…YEYF), 144–164 (ITTG…VVVL), and 184–204 (SYYW…IYFI).

It belongs to the cytochrome c oxidase subunit 3 family. In terms of assembly, associates with subunits I, II and IV to form cytochrome c oxidase.

It localises to the cell membrane. It carries out the reaction 4 Fe(II)-[cytochrome c] + O2 + 8 H(+)(in) = 4 Fe(III)-[cytochrome c] + 2 H2O + 4 H(+)(out). The chain is Cytochrome c oxidase subunit 3 (ctaE) from Corynebacterium efficiens (strain DSM 44549 / YS-314 / AJ 12310 / JCM 11189 / NBRC 100395).